We begin with the raw amino-acid sequence, 253 residues long: MITKRIIPCLDVDMGRVVKGVNFVNLKDVGDPVEIAEFYNKEGADEIVFLDISATHEGRATMIDVVRKTAEKLFIPLTVGGGIKNINDFRDILRAGADKISVNSSAIRNPKLIKKAAECFGSQCVVVAIDGKKRKDKDGWNVFINGGRIDTGIDAIEWARKVEKLGAGEILLTSMDADGTKEGYDLEFTNEVSKAVNIPVIASGGCGKLKHFGEIFEKSSADAALAASLFHFKELSIKEVKNYLKKEGFSVRL.

Residues Asp11 and Asp130 contribute to the active site.

The protein belongs to the HisA/HisF family. In terms of assembly, heterodimer of HisH and HisF.

The protein localises to the cytoplasm. It carries out the reaction 5-[(5-phospho-1-deoxy-D-ribulos-1-ylimino)methylamino]-1-(5-phospho-beta-D-ribosyl)imidazole-4-carboxamide + L-glutamine = D-erythro-1-(imidazol-4-yl)glycerol 3-phosphate + 5-amino-1-(5-phospho-beta-D-ribosyl)imidazole-4-carboxamide + L-glutamate + H(+). It functions in the pathway amino-acid biosynthesis; L-histidine biosynthesis; L-histidine from 5-phospho-alpha-D-ribose 1-diphosphate: step 5/9. Functionally, IGPS catalyzes the conversion of PRFAR and glutamine to IGP, AICAR and glutamate. The HisF subunit catalyzes the cyclization activity that produces IGP and AICAR from PRFAR using the ammonia provided by the HisH subunit. The sequence is that of Imidazole glycerol phosphate synthase subunit HisF from Clostridium botulinum (strain Kyoto / Type A2).